The sequence spans 249 residues: tRNA pseudouridine synthase A (249 aa).

The Nucleophile role is filled by Asp-53. Tyr-111 provides a ligand contact to substrate.

The protein belongs to the tRNA pseudouridine synthase TruA family. As to quaternary structure, homodimer.

The catalysed reaction is uridine(38/39/40) in tRNA = pseudouridine(38/39/40) in tRNA. Its function is as follows. Formation of pseudouridine at positions 38, 39 and 40 in the anticodon stem and loop of transfer RNAs. In Streptococcus pneumoniae (strain P1031), this protein is tRNA pseudouridine synthase A.